The following is a 381-amino-acid chain: Dual-specificity RNA methyltransferase RlmN (381 aa).

Glu-96 (proton acceptor) is an active-site residue. The Radical SAM core domain maps to 102 to 342 (TDDRGTLCVS…TRTTRGDDID (241 aa)). A disulfide bridge links Cys-109 with Cys-345. [4Fe-4S] cluster is bound by residues Cys-116, Cys-120, and Cys-123. S-adenosyl-L-methionine is bound by residues 170–171 (GE), Ser-202, 224–226 (SLH), and Asn-302. Catalysis depends on Cys-345, which acts as the S-methylcysteine intermediate.

The protein belongs to the radical SAM superfamily. RlmN family. [4Fe-4S] cluster serves as cofactor.

The protein resides in the cytoplasm. The enzyme catalyses adenosine(2503) in 23S rRNA + 2 reduced [2Fe-2S]-[ferredoxin] + 2 S-adenosyl-L-methionine = 2-methyladenosine(2503) in 23S rRNA + 5'-deoxyadenosine + L-methionine + 2 oxidized [2Fe-2S]-[ferredoxin] + S-adenosyl-L-homocysteine. It catalyses the reaction adenosine(37) in tRNA + 2 reduced [2Fe-2S]-[ferredoxin] + 2 S-adenosyl-L-methionine = 2-methyladenosine(37) in tRNA + 5'-deoxyadenosine + L-methionine + 2 oxidized [2Fe-2S]-[ferredoxin] + S-adenosyl-L-homocysteine. Its function is as follows. Specifically methylates position 2 of adenine 2503 in 23S rRNA and position 2 of adenine 37 in tRNAs. m2A2503 modification seems to play a crucial role in the proofreading step occurring at the peptidyl transferase center and thus would serve to optimize ribosomal fidelity. The chain is Dual-specificity RNA methyltransferase RlmN from Pseudomonas putida (strain ATCC 700007 / DSM 6899 / JCM 31910 / BCRC 17059 / LMG 24140 / F1).